Reading from the N-terminus, the 789-residue chain is Disintegrin and metalloproteinase domain-containing protein 7 (789 aa).

An N-terminal signal peptide occupies residues 1-23; that stretch reads MLTTGIFWMTVLISHIQERGIVG. Positions 24 to 176 are excised as a propeptide; that stretch reads VEGQELVHPK…NHSCVGLNFT (153 aa). Residues 24 to 667 lie on the Extracellular side of the membrane; that stretch reads VEGQELVHPK…EWGEALNLTS (644 aa). 3 N-linked (GlcNAc...) asparagine glycosylation sites follow: Asn-84, Asn-167, and Asn-174. Residues 199 to 393 enclose the Peptidase M12B domain; that stretch reads KFIELFVVAD…QKPACILNNP (195 aa). 4 disulfide bridges follow: Cys-310-Cys-388, Cys-350-Cys-372, Cys-352-Cys-357, and Cys-459-Cys-479. In terms of domain architecture, Disintegrin spans 401–487; the sequence is YPFCGNKKVD…ECPKDEFQAN (87 aa). Residues Asn-583, Asn-628, and Asn-664 are each glycosylated (N-linked (GlcNAc...) asparagine). Residues 668-689 form a helical membrane-spanning segment; the sequence is VSIMVIVLVMVIIGVGLVILLI. The Cytoplasmic segment spans residues 690–789; that stretch reads RYQKCIKMKQ…DTQSGCERLG (100 aa). The interval 764 to 789 is disordered; it reads RGIADPKQTDNVNLNLDTQSGCERLG. The span at 772–789 shows a compositional bias: polar residues; the sequence is TDNVNLNLDTQSGCERLG.

In terms of assembly, interacts with ITM2B in sperm; the interaction increases following capacitation. Interacts with HSPA5 and CANX. In terms of tissue distribution, expressed in both the head and tails of sperm (at protein level). Expressed in the epididymis (at protein level). Abundantly expressed in the apical region of the proximal caput epididymal epithelium, with decreasing expression in the mid and distal caput epididymal epithelium.

It is found in the membrane. Functionally, required for normal male fertility via maintenance of epithelial cell morphology in the caput epididymis and subsequently correct epididymis lumen structure required for sperm development. Plays a role in sperm motility, flagella morphology and tyrosine phosphorylation during sperm capacitance. Plays a role in normal expression levels of HSPA5, ITM2B and ADAM2 in sperm both prior to and post-capacitation. This is a non catalytic metalloprotease-like protein. In Mus musculus (Mouse), this protein is Disintegrin and metalloproteinase domain-containing protein 7.